Consider the following 617-residue polypeptide: Phosphatidylinositol-3,5-bisphosphate 3-phosphatase MTMR6 (617 aa).

Residues 1-101 (MEHIRTTKVE…YNSLLQLSKQ (101 aa)) form the GRAM domain. The interaction with RAB1B stretch occupies residues 2–141 (EHIRTTKVEQ…AEYERMGVPN (140 aa)). Tyr108 bears the Phosphotyrosine mark. Positions 124–499 (GWQLIDLAAE…FNFKFWRNMY (376 aa)) constitute a Myotubularin phosphatase domain. Asn248, Asn273, and Ile274 together coordinate a 1,2-diacyl-sn-glycero-3-phospho-(1D-myo-inositol-3,5-bisphosphate). Residues Asn248, Asn273, and Ile274 each contribute to the a 1,2-diacyl-sn-glycero-3-phospho-(1D-myo-inositol-3-phosphate) site. Residue Cys336 is the Phosphocysteine intermediate of the active site. 8 residues coordinate a 1,2-diacyl-sn-glycero-3-phospho-(1D-myo-inositol-3,5-bisphosphate): Ser337, Asp338, Gly339, Trp340, Asp341, Arg342, Lys378, and Arg382. Residues Ser337, Asp338, Gly339, Trp340, Asp341, and Arg342 each coordinate a 1,2-diacyl-sn-glycero-3-phospho-(1D-myo-inositol-3-phosphate). Position 382 (Arg382) interacts with a 1,2-diacyl-sn-glycero-3-phospho-(1D-myo-inositol-3-phosphate). A phosphoserine mark is found at Ser557, Ser585, and Ser607.

This sequence belongs to the protein-tyrosine phosphatase family. Non-receptor class myotubularin subfamily. Homodimer. Heterodimer (via C-terminus) with MTMR9 (via C-terminus). Interacts with ALKBH4. Interacts with KCNN4. Interacts (via GRAM domain) with RAB1B (in GDP-bound form); the interaction regulates MTMR6 recruitment to the endoplasmic reticulum-Golgi intermediate compartment. As to expression, isoform 1: Ubiquitously expressed including in heart, brain, spleen, lung, liver, muscle, kidney and testis (at protein level). Isoform 2: Expressed in testis (at protein level).

The protein localises to the cytoplasm. It is found in the endoplasmic reticulum-Golgi intermediate compartment. Its subcellular location is the cell projection. It localises to the ruffle membrane. The protein resides in the endoplasmic reticulum. The catalysed reaction is a 1,2-diacyl-sn-glycero-3-phospho-(1D-myo-inositol-3,5-bisphosphate) + H2O = a 1,2-diacyl-sn-glycero-3-phospho-(1D-myo-inositol-5-phosphate) + phosphate. It catalyses the reaction a 1,2-diacyl-sn-glycero-3-phospho-(1D-myo-inositol-3-phosphate) + H2O = a 1,2-diacyl-sn-glycero-3-phospho-(1D-myo-inositol) + phosphate. The enzyme catalyses 1,2-dioctanoyl-sn-glycero-3-phospho-(1D-myo-inositol-3,5-bisphosphate) + H2O = 1,2-dioctanoyl-sn-glycero-3-phospho-(1D-myo-inositol-5-phosphate) + phosphate. It carries out the reaction 1,2-dioctanoyl-sn-glycero-3-phospho-(1-D-myo-inositol-3-phosphate) + H2O = 1,2-dioctanoyl-sn-glycero-3-phospho-(1D-myo-inositol) + phosphate. Allosterically activated by phosphatidylserine and/or phosphatidylinositol 4-phosphate (PtdIns(4)P), and phosphatidylinositol 5-phosphate (PtdIns(5)P). Interaction with MTMR9 increases catalytic activity towards phosphatidylinositol 3,5-bisphosphate. In terms of biological role, lipid phosphatase that specifically dephosphorylates the D-3 position of phosphatidylinositol 3-phosphate and phosphatidylinositol 3,5-bisphosphate, generating phosphatidylinositol and phosphatidylinositol 5-phosphate. Binds with high affinity to phosphatidylinositol 3,5-bisphosphate (PtdIns(3,5)P2) but also to phosphatidylinositol 3-phosphate (PtdIns(3)P), phosphatidylinositol 4-phosphate (PtdIns(4)P), and phosphatidylinositol 5-phosphate (PtdIns(5)P), phosphatidic acid and phosphatidylserine. Negatively regulates ER-Golgi protein transport. Probably in association with MTMR9, plays a role in the late stages of macropinocytosis by dephosphorylating phosphatidylinositol 3-phosphate in membrane ruffles. Acts as a negative regulator of KCNN4/KCa3.1 channel activity in CD4(+) T-cells possibly by decreasing intracellular levels of phosphatidylinositol 3-phosphate. Negatively regulates proliferation of reactivated CD4(+) T-cells. In complex with MTMR9, negatively regulates DNA damage-induced apoptosis. The formation of the MTMR6-MTMR9 complex stabilizes both MTMR6 and MTMR9 protein levels. The protein is Phosphatidylinositol-3,5-bisphosphate 3-phosphatase MTMR6 of Mus musculus (Mouse).